We begin with the raw amino-acid sequence, 178 residues long: Protein-export protein SecB (178 aa).

The span at 1–13 shows a compositional bias: acidic residues; the sequence is MADEGDVLTDLDM. Residues 1–25 form a disordered region; sequence MADEGDVLTDLDMDPAAGGNGADNR.

It belongs to the SecB family. As to quaternary structure, homotetramer, a dimer of dimers. One homotetramer interacts with 1 SecA dimer.

The protein resides in the cytoplasm. Its function is as follows. One of the proteins required for the normal export of preproteins out of the cell cytoplasm. It is a molecular chaperone that binds to a subset of precursor proteins, maintaining them in a translocation-competent state. It also specifically binds to its receptor SecA. In Erythrobacter litoralis (strain HTCC2594), this protein is Protein-export protein SecB.